Reading from the N-terminus, the 525-residue chain is Ribosomal protein uS12 methylthiotransferase RimO (525 aa).

Polar residues predominate over residues 1–20; it reads MPKISTESVNTTIAPSQPAS. Positions 1 to 44 are disordered; it reads MPKISTESVNTTIAPSQPASTAPKDTATLFNPAKPTATPAQSSI. One can recognise an MTTase N-terminal domain in the interval 82-192; sequence PKIGFVSLGC…VIRAVALHVP (111 aa). [4Fe-4S] cluster-binding residues include Cys91, Cys127, Cys156, Cys230, Cys234, and Cys237. Residues 216–453 enclose the Radical SAM core domain; that stretch reads LTPSHYAYLK…MTLQQDISAQ (238 aa). A TRAM domain is found at 456-525; the sequence is QEKIGKTLMV…EYDLFASYQA (70 aa).

The protein belongs to the methylthiotransferase family. RimO subfamily. It depends on [4Fe-4S] cluster as a cofactor.

It is found in the cytoplasm. The enzyme catalyses L-aspartate(89)-[ribosomal protein uS12]-hydrogen + (sulfur carrier)-SH + AH2 + 2 S-adenosyl-L-methionine = 3-methylsulfanyl-L-aspartate(89)-[ribosomal protein uS12]-hydrogen + (sulfur carrier)-H + 5'-deoxyadenosine + L-methionine + A + S-adenosyl-L-homocysteine + 2 H(+). Functionally, catalyzes the methylthiolation of an aspartic acid residue of ribosomal protein uS12. The protein is Ribosomal protein uS12 methylthiotransferase RimO of Psychrobacter arcticus (strain DSM 17307 / VKM B-2377 / 273-4).